The sequence spans 281 residues: Pantothenate synthetase (281 aa).

Residue 30–37 coordinates ATP; it reads MGNLHQGH. The active-site Proton donor is the histidine 37. Glutamine 61 contacts (R)-pantoate. Glutamine 61 contacts beta-alanine. 149–152 contributes to the ATP binding site; that stretch reads GNKD. (R)-pantoate is bound at residue glutamine 155. Residues isoleucine 178 and 186–189 contribute to the ATP site; that span reads MSSR.

This sequence belongs to the pantothenate synthetase family. In terms of assembly, homodimer.

The protein localises to the cytoplasm. It catalyses the reaction (R)-pantoate + beta-alanine + ATP = (R)-pantothenate + AMP + diphosphate + H(+). It participates in cofactor biosynthesis; (R)-pantothenate biosynthesis; (R)-pantothenate from (R)-pantoate and beta-alanine: step 1/1. In terms of biological role, catalyzes the condensation of pantoate with beta-alanine in an ATP-dependent reaction via a pantoyl-adenylate intermediate. The protein is Pantothenate synthetase of Shewanella sp. (strain MR-7).